The primary structure comprises 169 residues: Allophycocyanin subunit beta-18 (169 aa).

N72 carries the post-translational modification N4-methylasparagine. C82 lines the (2R,3E)-phycocyanobilin pocket.

It belongs to the phycobiliprotein family. As to quaternary structure, heterodimer of an alpha and a beta chain. In terms of processing, contains one covalently linked bilin chromophore.

It localises to the plastid. Its subcellular location is the chloroplast thylakoid membrane. Light-harvesting photosynthetic bile pigment-protein from the phycobiliprotein complex. Allophycocyanin has a maximum absorption at approximately 650 nanometers. The sequence is that of Allophycocyanin subunit beta-18 (apcF) from Porphyra purpurea (Red seaweed).